Here is a 149-residue protein sequence, read N- to C-terminus: FAD synthase (149 aa).

ATP-binding positions include 9–10 (TF), 14–17 (HPGH), N92, and Y119.

Belongs to the archaeal FAD synthase family. Homodimer. The cofactor is a divalent metal cation.

It catalyses the reaction FMN + ATP + H(+) = FAD + diphosphate. It participates in cofactor biosynthesis; FAD biosynthesis; FAD from FMN: step 1/1. In terms of biological role, catalyzes the transfer of the AMP portion of ATP to flavin mononucleotide (FMN) to produce flavin adenine dinucleotide (FAD) coenzyme. The polypeptide is FAD synthase (Methanoculleus marisnigri (strain ATCC 35101 / DSM 1498 / JR1)).